Reading from the N-terminus, the 525-residue chain is 2,3-bisphosphoglycerate-independent phosphoglycerate mutase (525 aa).

2 residues coordinate Mn(2+): Asp18 and Ser68. The active-site Phosphoserine intermediate is the Ser68. Residues His129, 159–160, Arg194, Arg200, 269–272, and Lys345 each bind substrate; these read RD and RADR. 5 residues coordinate Mn(2+): Asp413, His417, Asp454, His455, and His473.

The protein belongs to the BPG-independent phosphoglycerate mutase family. In terms of assembly, monomer. The cofactor is Mn(2+).

It catalyses the reaction (2R)-2-phosphoglycerate = (2R)-3-phosphoglycerate. It participates in carbohydrate degradation; glycolysis; pyruvate from D-glyceraldehyde 3-phosphate: step 3/5. In terms of biological role, catalyzes the interconversion of 2-phosphoglycerate and 3-phosphoglycerate. The chain is 2,3-bisphosphoglycerate-independent phosphoglycerate mutase from Chromohalobacter salexigens (strain ATCC BAA-138 / DSM 3043 / CIP 106854 / NCIMB 13768 / 1H11).